We begin with the raw amino-acid sequence, 468 residues long: Methionine aminopeptidase 2 (468 aa).

Positions 63–74 (AAKEATKKDAKG) are enriched in basic and acidic residues. A disordered region spans residues 63 to 87 (AAKEATKKDAKGGKGKANGSAAATA). Position 219 (His-219) interacts with substrate. Residues Asp-239, Asp-250, and His-319 each contribute to the a divalent metal cation site. His-327 lines the substrate pocket. Residues Glu-352 and Glu-449 each coordinate a divalent metal cation.

The protein belongs to the peptidase M24A family. Methionine aminopeptidase eukaryotic type 2 subfamily. It depends on Co(2+) as a cofactor. Zn(2+) serves as cofactor. Mn(2+) is required as a cofactor. Requires Fe(2+) as cofactor.

It localises to the cytoplasm. The catalysed reaction is Release of N-terminal amino acids, preferentially methionine, from peptides and arylamides.. With respect to regulation, inhibited by the fumagillin analog, TNP-470. Its function is as follows. Cotranslationally removes the N-terminal methionine from nascent proteins. The N-terminal methionine is often cleaved when the second residue in the primary sequence is small and uncharged (Met-Ala-, Cys, Gly, Pro, Ser, Thr, or Val). Required for germ cell proliferation and/or differentiation. This Caenorhabditis elegans protein is Methionine aminopeptidase 2.